The sequence spans 169 residues: HTH-type transcriptional regulator PchR (169 aa).

Residues tyrosine 10–serine 153 form the HTH marR-type domain. Residues asparagine 64–lysine 87 constitute a DNA-binding region (H-T-H motif).

As to quaternary structure, homodimer.

Functionally, represses the expression of the yvmC-cypX operon, which is involved in pulcherriminic acid biosynthesis. Also negatively regulates yvmA, yvnB and its own expression. Positively regulates yisI expression. Acts by binding specifically to a 14-bp palindromic motif, the YvmB box, which is present in the promoter region of the target genes. This is HTH-type transcriptional regulator PchR from Bacillus subtilis (strain 168).